We begin with the raw amino-acid sequence, 656 residues long: Choline transporter-like protein 3 (656 aa).

Residues 37–57 (WLVLFFLFWTGLVFIMGYSVV) form a helical membrane-spanning segment. 2 N-linked (GlcNAc...) asparagine glycosylation sites follow: asparagine 141 and asparagine 154. The next 5 membrane-spanning stretches (helical) occupy residues 216–236 (DTIL…LFAF), 242–262 (LLIH…CGVL), 288–308 (LAFA…IFTL), 337–357 (LWTC…LLSL), and 381–401 (YMWW…LACQ). Asparagine 506 and asparagine 524 each carry an N-linked (GlcNAc...) asparagine glycan. A helical membrane pass occupies residues 537–557 (FVIFLGKVLVVCFSIFGGLMA). Asparagine 559 carries an N-linked (GlcNAc...) asparagine glycan. A helical membrane pass occupies residues 566 to 586 (VWAIPLLLVAFFACVVAHSFL). Residues 634–656 (AKSQGQKDALPNEEGTELQPIVR) form a disordered region.

The protein belongs to the CTL (choline transporter-like) family.

The protein resides in the membrane. This Mus musculus (Mouse) protein is Choline transporter-like protein 3 (Slc44a3).